Reading from the N-terminus, the 410-residue chain is Cytohesin-2 (410 aa).

A coiled-coil region spans residues 13 to 56 (PEERMELENIRRRKQELLVEIQRLREELSEAMSEVEGLEANEGS). An SEC7 domain is found at 54–241 (EGSKTLQRNR…RNLYDSIRNE (188 aa)). One can recognise a PH domain in the interval 259 to 386 (NPDREGWLLK…WIKSIQAAVS (128 aa)). A 1,2-diacyl-sn-glycero-3-phospho-(1D-myo-inositol-3,4,5-trisphosphate)-binding positions include 268-271 (KLGA), R290, Y301, R311, K349, N360, and H361. Residues 397–405 (RKKRISVKK) form a C-terminal autoinhibitory region region.

As to quaternary structure, heteromer. Composed of TAMALIN, CYTH2 and at least one GRM1. Interacts with ARRB1. Interacts with ARL4D; the interaction is direct. Directly interacts with CCDC120 through the coiled coil domain; this interaction stabilizes CCDC120, possibly by preventing its ubiquitination, and is required for neurite growth in neuroblastoma cells. Interacts (via N-terminal domain) with INAVA (via N-terminal domain).

It is found in the cell membrane. Its subcellular location is the cytoplasm. It localises to the cell projection. The protein localises to the growth cone. Acts as a guanine-nucleotide exchange factor (GEF). Promotes guanine-nucleotide exchange on ARF1, ARF3 and ARF6. Promotes the activation of ARF factors through replacement of GDP with GTP. The cell membrane form, in association with ARL4 proteins, recruits ARF6 to the plasma membrane. Involved in neurite growth. The polypeptide is Cytohesin-2 (CYTH2) (Bos taurus (Bovine)).